A 217-amino-acid polypeptide reads, in one-letter code: Glycosylphosphatidylinositol anchor biosynthesis protein 11 (217 aa).

Transmembrane regions (helical) follow at residues 45 to 65 (TWLTIPWHLIALVYIYVKVFN) and 68 to 88 (NTAELLACLVPLQILYTIFQF). Residue N102 is glycosylated (N-linked (GlcNAc...) asparagine). Transmembrane regions (helical) follow at residues 107–127 (AISILACIVLSIPVVVIIILF), 134–154 (LLWETWLLALHCSFLAYPAVY), 169–189 (YFILIVVGCWISCVVIPLDWD), and 197–217 (IPIVIGAYLGAFVGFAYGAYL).

The protein belongs to the PIGF family.

The protein resides in the endoplasmic reticulum membrane. It functions in the pathway glycolipid biosynthesis; glycosylphosphatidylinositol-anchor biosynthesis. Functionally, acts in the GPI biosynthetic pathway between GlcNAc-PI synthesis and GPI transfer to protein. The sequence is that of Glycosylphosphatidylinositol anchor biosynthesis protein 11 (GPI11) from Candida glabrata (strain ATCC 2001 / BCRC 20586 / JCM 3761 / NBRC 0622 / NRRL Y-65 / CBS 138) (Yeast).